We begin with the raw amino-acid sequence, 355 residues long: Probable nitronate monooxygenase (355 aa).

FMN contacts are provided by residues Asn71, Gln175, Gly180, Gly218, and Gln237–Thr240.

It belongs to the nitronate monooxygenase family. NMO class I subfamily. FMN is required as a cofactor.

The catalysed reaction is 3 propionate 3-nitronate + 3 O2 + H2O = 3 3-oxopropanoate + 2 nitrate + nitrite + H2O2 + 3 H(+). Nitronate monooxygenase that uses molecular oxygen to catalyze the oxidative denitrification of alkyl nitronates. Acts on propionate 3-nitronate (P3N), the presumed physiological substrate. Probably functions in the detoxification of P3N, a metabolic poison produced by plants and fungi as a defense mechanism. The polypeptide is Probable nitronate monooxygenase (Staphylococcus aureus (strain USA300)).